Reading from the N-terminus, the 407-residue chain is Phosphonoacetate hydrolase (407 aa).

Residues aspartate 25, threonine 64, aspartate 202, histidine 206, aspartate 241, histidine 242, and histidine 368 each coordinate Zn(2+). Threonine 64 and aspartate 202 together coordinate substrate. Substrate is bound by residues histidine 242 and histidine 368.

It belongs to the alkaline phosphatase family. PhnA subfamily. In terms of assembly, homodimer. Zn(2+) serves as cofactor.

The catalysed reaction is phosphonoacetate + H2O = acetate + phosphate + H(+). In terms of biological role, specifically hydrolyzes phosphonoacetate. Does not have activity on other organophosphonates or acetates. This is Phosphonoacetate hydrolase from Pseudomonas cedrina.